The primary structure comprises 257 residues: Beta-fibrinogenase mucrofibrase-3 (257 aa).

The N-terminal stretch at 1-18 is a signal peptide; the sequence is MVLIRVLANLLILQLSYA. The propeptide occupies 19–24; the sequence is QKSSEL. In terms of domain architecture, Peptidase S1 spans 25-248; sequence VIGGDECNIN…HLDWIKGIIA (224 aa). Cystine bridges form between Cys-31/Cys-162, Cys-49/Cys-65, Cys-97/Cys-255, Cys-141/Cys-209, Cys-173/Cys-188, and Cys-199/Cys-224. Catalysis depends on charge relay system residues His-64 and Asp-109. Ser-203 functions as the Charge relay system in the catalytic mechanism.

The protein belongs to the peptidase S1 family. Snake venom subfamily. In terms of assembly, monomer. Expressed by the venom gland.

The protein resides in the secreted. In terms of biological role, snake venom serine protease with fibrinogenolytic activities. Cleaves beta-chain of fibrinogen (FGB) efficiently and shows relatively lower activity on alpha-chain. In Protobothrops mucrosquamatus (Taiwan habu), this protein is Beta-fibrinogenase mucrofibrase-3.